Consider the following 516-residue polypeptide: Delta(24)-sterol reductase (516 aa).

The first 22 residues, 1–22 (MEPAVSLAVCALLFLLWVRVKG), serve as a signal peptide directing secretion. The Lumenal segment spans residues 23–31 (LEFVLIHQR). A helical transmembrane segment spans residues 32-52 (WVFVCLFLLPLSLIFDIYYYV). The Cytoplasmic segment spans residues 53–516 (RAWVVFKLSS…YDKICKAARH (464 aa)). The 177-residue stretch at 58 to 234 (FKLSSAPRLH…VAAEIRIIPA (177 aa)) folds into the FAD-binding PCMH-type domain. 163–175 (TVGGLIMGTGIES) contacts FAD.

The protein belongs to the FAD-binding oxidoreductase/transferase type 4 family. In terms of assembly, interacts with DHCR7; this interaction regulates DHCR7 activity. It depends on FAD as a cofactor.

It localises to the endoplasmic reticulum membrane. The protein resides in the golgi apparatus membrane. The enzyme catalyses cholesterol + NADP(+) = desmosterol + NADPH + H(+). It carries out the reaction lanosterol + NADPH + H(+) = 24,25-dihydrolanosterol + NADP(+). The catalysed reaction is 5alpha-cholest-8-en-3beta-ol + NADP(+) = zymosterol + NADPH + H(+). It participates in steroid biosynthesis; cholesterol biosynthesis. Functionally, catalyzes the reduction of the delta-24 double bond of sterol intermediates during cholesterol biosynthesis. In addition to its cholesterol-synthesizing activity, can protect cells from oxidative stress by reducing caspase 3 activity during apoptosis induced by oxidative stress. Also protects against amyloid-beta peptide-induced apoptosis. In Macaca fascicularis (Crab-eating macaque), this protein is Delta(24)-sterol reductase (DHCR24).